A 255-amino-acid chain; its full sequence is Type III pantothenate kinase (255 aa).

Residue 6-13 participates in ATP binding; that stretch reads DVGNTNTV. Residues tyrosine 100 and 107-110 contribute to the substrate site; that span reads GADR. Catalysis depends on aspartate 109, which acts as the Proton acceptor. Aspartate 129 is a K(+) binding site. Threonine 132 provides a ligand contact to ATP. Threonine 184 provides a ligand contact to substrate.

It belongs to the type III pantothenate kinase family. Homodimer. NH4(+) serves as cofactor. K(+) is required as a cofactor.

It is found in the cytoplasm. The catalysed reaction is (R)-pantothenate + ATP = (R)-4'-phosphopantothenate + ADP + H(+). It functions in the pathway cofactor biosynthesis; coenzyme A biosynthesis; CoA from (R)-pantothenate: step 1/5. Its function is as follows. Catalyzes the phosphorylation of pantothenate (Pan), the first step in CoA biosynthesis. In Syntrophomonas wolfei subsp. wolfei (strain DSM 2245B / Goettingen), this protein is Type III pantothenate kinase.